The primary structure comprises 193 residues: Fra a 1-associated protein (193 aa).

Residues 1–27 form a disordered region; it reads MGWVWKDDDEQGGHVNPSAADISPRLD.

Interacts with FRAA1E, FRAA2 and FRAA3.

This chain is Fra a 1-associated protein, found in Fragaria ananassa (Strawberry).